A 207-amino-acid chain; its full sequence is Mediator of RNA polymerase II transcription subunit 21 (207 aa).

The tract at residues 37–121 (PHPDVPDAAP…PDSPRTFASR (85 aa)) is disordered. Over residues 65–80 (PVPAQSQASPPAQNPA) the composition is skewed to low complexity. The segment covering 84–96 (AGAGTSVGEGGQT) has biased composition (gly residues). The span at 97-108 (PGPAAGAGADPN) shows a compositional bias: low complexity. A coiled-coil region spans residues 146 to 196 (IDSSEAEQEKRIRELEGELRRVEEERELKMRELKRLRRTLENVLRAVETGL).

It belongs to the Mediator complex subunit 21 family. Component of the Mediator complex.

Its subcellular location is the nucleus. In terms of biological role, component of the Mediator complex, a coactivator involved in the regulated transcription of nearly all RNA polymerase II-dependent genes. Mediator functions as a bridge to convey information from gene-specific regulatory proteins to the basal RNA polymerase II transcription machinery. Mediator is recruited to promoters by direct interactions with regulatory proteins and serves as a scaffold for the assembly of a functional preinitiation complex with RNA polymerase II and the general transcription factors. The protein is Mediator of RNA polymerase II transcription subunit 21 (srb7) of Neosartorya fischeri (strain ATCC 1020 / DSM 3700 / CBS 544.65 / FGSC A1164 / JCM 1740 / NRRL 181 / WB 181) (Aspergillus fischerianus).